Here is a 543-residue protein sequence, read N- to C-terminus: MKLLTTGLLASAALVAAQEQQVLRADEVFGKAPLPDASIFDETIKQFQSSIEDGISHFWSEMKTNFKDYLPMISLPKKHNRRPDSEWDHVVRGADVESVWVQGADGEKRREIDGKLKNYDLRVKSVDPSQLGIDPGVKQYSGYLDDNDADKHLFYWFFESRNDPKNDPVVLWLNGGPGCSSLTGLFLELGPATIDKNLKVVHNPYSWNSNASVIFLDQPVNVGFSYSGSSVSDTVAAGKDVYALLTLFFKQFPEYATQDFHISGESYAGHYIPVFAAEILSHKNTNINLKSALIGNGLTDPLTQYPHYRPMACGDGGYPAVLDQGTCRSMDNSLERCLSLIETCYSSESAWVCVPAAMYCNSAILAPYQQTGMNPYDVRSKCEDMGSLCYPQLNAITEWLNQKSVMKALGVEVESYESCNSGINRDFLFHGDWMKPFHRLVPSVLEKIPVLIYAGDADFICNWLGNQAWTEALEWPGHKKFTEAKLQDLKIVDNKNKGKKIGQVKSSGNFTFMRIFGAGHMVPLNQPEASLEFFNRWLRGEWH.

An N-terminal signal peptide occupies residues 1–17 (MKLLTTGLLASAALVAA). The propeptide occupies 18 to 124 (QEQQVLRADE…KLKNYDLRVK (107 aa)). 5 disulfide bridges follow: C179–C419, C313–C327, C337–C360, C344–C353, and C382–C389. N-linked (GlcNAc...) asparagine glycosylation occurs at N210. The active site involves S266. D458 is an active-site residue. Residue N509 is glycosylated (N-linked (GlcNAc...) asparagine). Residue H520 is part of the active site.

It belongs to the peptidase S10 family.

It localises to the vacuole. It carries out the reaction Release of a C-terminal amino acid with broad specificity.. In terms of biological role, vacuolar carboxypeptidase involved in degradation of small peptides. Digests preferentially peptides containing an aliphatic or hydrophobic residue in P1' position, as well as methionine, leucine or phenylalanine in P1 position of ester substrate. The polypeptide is Carboxypeptidase Y homolog A (CPYA) (Arthroderma gypseum (strain ATCC MYA-4604 / CBS 118893) (Microsporum gypseum)).